The primary structure comprises 207 residues: Dephospho-CoA kinase (207 aa).

The region spanning 10 to 207 is the DPCK domain; sequence ILGLTGGIGS…FYLTLRGGQS (198 aa). 18–23 contacts ATP; it reads GSGKSA.

This sequence belongs to the CoaE family.

It is found in the cytoplasm. It catalyses the reaction 3'-dephospho-CoA + ATP = ADP + CoA + H(+). It functions in the pathway cofactor biosynthesis; coenzyme A biosynthesis; CoA from (R)-pantothenate: step 5/5. Catalyzes the phosphorylation of the 3'-hydroxyl group of dephosphocoenzyme A to form coenzyme A. In Pseudomonas syringae pv. syringae (strain B728a), this protein is Dephospho-CoA kinase.